We begin with the raw amino-acid sequence, 280 residues long: Equatorin (280 aa).

The signal sequence occupies residues methionine 1–serine 19. Over leucine 20 to lysine 183 the chain is Vesicular. The disordered stretch occupies residues alanine 112 to proline 131. A compositionally biased stretch (basic and acidic residues) spans glutamate 117–arginine 126. Asparagine 145 is a glycosylation site (N-linked (GlcNAc...) asparagine). The helical transmembrane segment at leucine 184–phenylalanine 204 threads the bilayer. At alanine 205–glutamate 280 the chain is on the cytoplasmic side. Serine 279 bears the Phosphoserine mark.

As to quaternary structure, interacts with SNAP25. Highly N- and O-glycosylated; contains sialic acid. In terms of tissue distribution, highly expressed in testis and epididymis. Low expression in other tissues.

It localises to the cytoplasmic vesicle. The protein resides in the secretory vesicle. The protein localises to the acrosome membrane. It is found in the acrosome inner membrane. Its subcellular location is the acrosome outer membrane. Its function is as follows. Acrosomal membrane-anchored protein involved in the process of fertilization and in acrosome biogenesis. This Rattus norvegicus (Rat) protein is Equatorin (Eqtn).